A 202-amino-acid polypeptide reads, in one-letter code: CASP-like protein 2B1 (202 aa).

Over 1–29 (MSYLGVGVSPGNVPVYHGSNLKVIDKRVR) the chain is Cytoplasmic. The helical transmembrane segment at 30–50 (LAELVLRCLICGLGVLAAVLV) threads the bilayer. At 51–72 (GTDTQVKEIFSIQKKARFTDMK) the chain is on the extracellular side. A helical transmembrane segment spans residues 73 to 93 (ALVFLVIANGIAAAYSLLQGV). Over 94-109 (RCVVGMVRGSALFSKP) the chain is Cytoplasmic. A helical transmembrane segment spans residues 110 to 130 (LAWAIFSGDQMMAYLTVAAVA). Over 131-164 (AAAQSAVFAKLGQPELQWMKICNMYGKFCNQVGE) the chain is Extracellular. Residues 165–185 (GIASALLVSVSMVVLSCISAF) form a helical membrane-spanning segment. Topologically, residues 186 to 202 (SLFRLYGANKGKDCTRW) are cytoplasmic.

Belongs to the Casparian strip membrane proteins (CASP) family. As to quaternary structure, homodimer and heterodimers.

The protein localises to the cell membrane. This chain is CASP-like protein 2B1, found in Ricinus communis (Castor bean).